A 317-amino-acid polypeptide reads, in one-letter code: Ribosomal RNA small subunit methyltransferase A (317 aa).

Positions 37, 39, 64, 85, 115, and 134 each coordinate S-adenosyl-L-methionine. The interval 293–317 is disordered; it reads GGSDEATSTGRDARAPDISGHASAS.

This sequence belongs to the class I-like SAM-binding methyltransferase superfamily. rRNA adenine N(6)-methyltransferase family. RsmA subfamily.

The protein resides in the cytoplasm. The catalysed reaction is adenosine(1518)/adenosine(1519) in 16S rRNA + 4 S-adenosyl-L-methionine = N(6)-dimethyladenosine(1518)/N(6)-dimethyladenosine(1519) in 16S rRNA + 4 S-adenosyl-L-homocysteine + 4 H(+). Functionally, specifically dimethylates two adjacent adenosines (A1518 and A1519) in the loop of a conserved hairpin near the 3'-end of 16S rRNA in the 30S particle. May play a critical role in biogenesis of 30S subunits. This Mycobacterium bovis (strain BCG / Tokyo 172 / ATCC 35737 / TMC 1019) protein is Ribosomal RNA small subunit methyltransferase A.